The following is a 224-amino-acid chain: Beta-casein (224 aa).

The N-terminal stretch at 1–15 (MKVLILACLVALALA) is a signal peptide. Residues serine 30, serine 32, serine 33, and serine 34 each carry the phosphoserine modification.

Belongs to the beta-casein family. Mammary gland specific. Secreted in milk.

The protein resides in the secreted. Important role in determination of the surface properties of the casein micelles. The protein is Beta-casein (CSN2) of Bubalus bubalis (Domestic water buffalo).